We begin with the raw amino-acid sequence, 480 residues long: Methylenetetrahydrofolate--tRNA-(uracil-5-)-methyltransferase TrmFO (480 aa).

15-20 (GGGLAG) lines the FAD pocket.

This sequence belongs to the MnmG family. TrmFO subfamily. FAD is required as a cofactor.

It is found in the cytoplasm. The catalysed reaction is uridine(54) in tRNA + (6R)-5,10-methylene-5,6,7,8-tetrahydrofolate + NADH + H(+) = 5-methyluridine(54) in tRNA + (6S)-5,6,7,8-tetrahydrofolate + NAD(+). The enzyme catalyses uridine(54) in tRNA + (6R)-5,10-methylene-5,6,7,8-tetrahydrofolate + NADPH + H(+) = 5-methyluridine(54) in tRNA + (6S)-5,6,7,8-tetrahydrofolate + NADP(+). Its function is as follows. Catalyzes the folate-dependent formation of 5-methyl-uridine at position 54 (M-5-U54) in all tRNAs. This Sinorhizobium medicae (strain WSM419) (Ensifer medicae) protein is Methylenetetrahydrofolate--tRNA-(uracil-5-)-methyltransferase TrmFO.